We begin with the raw amino-acid sequence, 81 residues long: Sulfur carrier protein TusA (81 aa).

The active-site Cysteine persulfide intermediate is C19.

It belongs to the sulfur carrier protein TusA family. In terms of assembly, interacts with IscS.

It localises to the cytoplasm. It participates in tRNA modification. Functionally, sulfur carrier protein involved in sulfur trafficking in the cell. Part of a sulfur-relay system required for 2-thiolation during synthesis of 2-thiouridine of the modified wobble base 5-methylaminomethyl-2-thiouridine (mnm(5)s(2)U) in tRNA. Interacts with IscS and stimulates its cysteine desulfurase activity. Accepts an activated sulfur from IscS, which is then transferred to TusD, and thus determines the direction of sulfur flow from IscS to 2-thiouridine formation. Also appears to be involved in sulfur transfer for the biosynthesis of molybdopterin. This is Sulfur carrier protein TusA from Citrobacter koseri (strain ATCC BAA-895 / CDC 4225-83 / SGSC4696).